A 334-amino-acid polypeptide reads, in one-letter code: Pantothenate synthetase (334 aa).

34 to 41 (MGALHEGH) is a binding site for ATP. The active-site Proton donor is His-41. Gln-71 contacts (R)-pantoate. Gln-71 is a beta-alanine binding site. ATP is bound at residue 158 to 161 (GQKD). Gln-164 contacts (R)-pantoate. ATP-binding positions include Val-187 and 195-198 (LSSR). Residues 288–334 (PLMLGTRGPAGEASPPNRERSEPGSAEQNKSPGEARTTPSGTSEASE) form a disordered region. The span at 313–334 (AEQNKSPGEARTTPSGTSEASE) shows a compositional bias: polar residues.

Belongs to the pantothenate synthetase family. Homodimer.

The protein localises to the cytoplasm. The enzyme catalyses (R)-pantoate + beta-alanine + ATP = (R)-pantothenate + AMP + diphosphate + H(+). It participates in cofactor biosynthesis; (R)-pantothenate biosynthesis; (R)-pantothenate from (R)-pantoate and beta-alanine: step 1/1. In terms of biological role, catalyzes the condensation of pantoate with beta-alanine in an ATP-dependent reaction via a pantoyl-adenylate intermediate. The protein is Pantothenate synthetase of Nocardioides sp. (strain ATCC BAA-499 / JS614).